Consider the following 101-residue polypeptide: Small ribosomal subunit protein uS14c (101 aa).

The protein belongs to the universal ribosomal protein uS14 family. As to quaternary structure, part of the 30S ribosomal subunit.

The protein resides in the plastid. Binds 16S rRNA, required for the assembly of 30S particles. The polypeptide is Small ribosomal subunit protein uS14c (Helicosporidium sp. subsp. Simulium jonesii (Green alga)).